A 269-amino-acid polypeptide reads, in one-letter code: Tryptophan synthase alpha chain (269 aa).

Catalysis depends on proton acceptor residues E49 and D60.

Belongs to the TrpA family. Tetramer of two alpha and two beta chains.

The enzyme catalyses (1S,2R)-1-C-(indol-3-yl)glycerol 3-phosphate + L-serine = D-glyceraldehyde 3-phosphate + L-tryptophan + H2O. It functions in the pathway amino-acid biosynthesis; L-tryptophan biosynthesis; L-tryptophan from chorismate: step 5/5. In terms of biological role, the alpha subunit is responsible for the aldol cleavage of indoleglycerol phosphate to indole and glyceraldehyde 3-phosphate. The protein is Tryptophan synthase alpha chain of Actinobacillus succinogenes (strain ATCC 55618 / DSM 22257 / CCUG 43843 / 130Z).